Here is a 133-residue protein sequence, read N- to C-terminus: Brain natriuretic peptide (133 aa).

The signal sequence occupies residues 1 to 22 (MVVSFVSICGLLLIFNLPLSTS). Residues 44-53 (SMSEETEEDQ) are compositionally biased toward acidic residues. Disordered regions lie at residues 44–76 (SMSEETEEDQMVPANSESLEPVGSMKQTANRDQ) and 93–112 (TRKNVQNDSSRRSSSCFGRR). A disulfide bridge links Cys108 with Cys124.

Belongs to the natriuretic peptide family.

The protein localises to the secreted. Cardiac hormone which may function as a paracrine antifibrotic factor in the heart. Also plays a key role in cardiovascular homeostasis through natriuresis, diuresis, vasorelaxation, and inhibition of renin and aldosterone secretion. Has a cGMP-stimulating activity. The polypeptide is Brain natriuretic peptide (nppb) (Takifugu rubripes (Japanese pufferfish)).